The primary structure comprises 76 residues: Omega-agatoxin-Aa3b (76 aa).

Disulfide bonds link Cys-2–Cys-19, Cys-9–Cys-25, Cys-16–Cys-52, Cys-18–Cys-40, Cys-27–Cys-38, and Cys-59–Cys-67.

Belongs to the neurotoxin 04 (omega-agtx) family. 03 (type II/III omega-agtx) subfamily. In terms of tissue distribution, expressed by the venom gland.

The protein resides in the secreted. Functionally, omega-agatoxins are antagonists of voltage-gated calcium channels. This toxin blocks calcium channels in insect central neurons but not at peripheral neuromuscular junctions. In vertebrates, it is broadly active against all high-threshold Cav1/CACNA1 channels and Cav2.2/CACNA1B channels. In Agelenopsis aperta (North American funnel-web spider), this protein is Omega-agatoxin-Aa3b.